A 243-amino-acid polypeptide reads, in one-letter code: Cell division protein FtsQ (243 aa).

Residues 1 to 19 (MKRYNAKRKTHRNLKSIKK) are Cytoplasmic-facing. A helical transmembrane segment spans residues 20-40 (LIPTVLALLAFVSLLAGIITL). The Periplasmic segment spans residues 41–243 (HNPKTLPFRQ…SNGLAIQWKN (203 aa)). The POTRA domain occupies 46-115 (LPFRQIKITV…NELEIQVEEQ (70 aa)).

Belongs to the FtsQ/DivIB family. FtsQ subfamily. In terms of assembly, part of a complex composed of FtsB, FtsL and FtsQ.

The protein localises to the cell inner membrane. Functionally, essential cell division protein. May link together the upstream cell division proteins, which are predominantly cytoplasmic, with the downstream cell division proteins, which are predominantly periplasmic. May control correct divisome assembly. The polypeptide is Cell division protein FtsQ (Coxiella burnetii (strain RSA 493 / Nine Mile phase I)).